Reading from the N-terminus, the 128-residue chain is Large ribosomal subunit protein bL12 (128 aa).

This sequence belongs to the bacterial ribosomal protein bL12 family. Homodimer. Part of the ribosomal stalk of the 50S ribosomal subunit. Forms a multimeric L10(L12)X complex, where L10 forms an elongated spine to which 2 to 4 L12 dimers bind in a sequential fashion. Binds GTP-bound translation factors.

Its function is as follows. Forms part of the ribosomal stalk which helps the ribosome interact with GTP-bound translation factors. Is thus essential for accurate translation. The polypeptide is Large ribosomal subunit protein bL12 (Rubrobacter xylanophilus (strain DSM 9941 / JCM 11954 / NBRC 16129 / PRD-1)).